A 388-amino-acid chain; its full sequence is Small ribosomal subunit protein uS3m (388 aa).

This sequence belongs to the universal ribosomal protein uS3 family.

The protein resides in the mitochondrion. Its function is as follows. Essential for mitochondrial protein synthesis and required for the maturation of small ribosomal subunits. This Kluyveromyces lactis (strain ATCC 8585 / CBS 2359 / DSM 70799 / NBRC 1267 / NRRL Y-1140 / WM37) (Yeast) protein is Small ribosomal subunit protein uS3m (VAR1).